The chain runs to 208 residues: MQVLHLDSSILGDASASRILTAAIVDELRRDNPGATVIHRDLAVEAIPHLDGAIAAGFRATGADGFDAVTLAEHARSEALVGELLASDVIVVGAPMYNFSVPSQLKAWIDRVAQAGRTFKYTETGPVGLTGGKKVIVASTRGGMYSAGPTAAMDFQEAYLKTVFGFLGITDVQFVRAERLAMGPDARAQALEAAHAAMHDVVNQAIAA.

FMN contacts are provided by residues serine 9, 15-17, 96-99, and 140-143; these read SAS, MYNF, and TRGG.

The protein belongs to the azoreductase type 1 family. In terms of assembly, homodimer. The cofactor is FMN.

It catalyses the reaction 2 a quinone + NADH + H(+) = 2 a 1,4-benzosemiquinone + NAD(+). The catalysed reaction is N,N-dimethyl-1,4-phenylenediamine + anthranilate + 2 NAD(+) = 2-(4-dimethylaminophenyl)diazenylbenzoate + 2 NADH + 2 H(+). Quinone reductase that provides resistance to thiol-specific stress caused by electrophilic quinones. Its function is as follows. Also exhibits azoreductase activity. Catalyzes the reductive cleavage of the azo bond in aromatic azo compounds to the corresponding amines. This is FMN-dependent NADH:quinone oxidoreductase from Ralstonia nicotianae (strain ATCC BAA-1114 / GMI1000) (Ralstonia solanacearum).